The sequence spans 65 residues: MPKIGPMEILIIVLLVVVVFGIGKLPQVGDAIGKGIRNFRKASSGEEEKEEVETKEETKTIEKSE.

Residues 9–29 (ILIIVLLVVVVFGIGKLPQVG) traverse the membrane as a helical segment. A disordered region spans residues 43–65 (SSGEEEKEEVETKEETKTIEKSE). Acidic residues predominate over residues 45 to 54 (GEEEKEEVET). Residues 55–65 (KEETKTIEKSE) show a composition bias toward basic and acidic residues.

Belongs to the TatA/E family. In terms of assembly, forms a complex with TatC.

The protein localises to the cell membrane. Part of the twin-arginine translocation (Tat) system that transports large folded proteins containing a characteristic twin-arginine motif in their signal peptide across membranes. TatA could form the protein-conducting channel of the Tat system. The polypeptide is Sec-independent protein translocase protein TatA (Dehalococcoides mccartyi (strain ATCC BAA-2266 / KCTC 15142 / 195) (Dehalococcoides ethenogenes (strain 195))).